Consider the following 955-residue polypeptide: Leucine--tRNA ligase (955 aa).

The 'HIGH' region motif lies at 51 to 61; sequence PYLNGVLHAGH. Positions 647–651 match the 'KMSKS' region motif; sequence KLSKS. Lys650 is a binding site for ATP.

It belongs to the class-I aminoacyl-tRNA synthetase family.

Its subcellular location is the cytoplasm. It carries out the reaction tRNA(Leu) + L-leucine + ATP = L-leucyl-tRNA(Leu) + AMP + diphosphate. The chain is Leucine--tRNA ligase from Methanococcus maripaludis (strain C5 / ATCC BAA-1333).